The following is a 343-amino-acid chain: tRNA N6-adenosine threonylcarbamoyltransferase (343 aa).

Fe cation is bound by residues His-111 and His-115. Substrate contacts are provided by residues 134–138, Asp-167, Gly-180, and Asn-276; that span reads LVSGG. Asp-304 provides a ligand contact to Fe cation.

This sequence belongs to the KAE1 / TsaD family. Fe(2+) is required as a cofactor.

The protein localises to the cytoplasm. It carries out the reaction L-threonylcarbamoyladenylate + adenosine(37) in tRNA = N(6)-L-threonylcarbamoyladenosine(37) in tRNA + AMP + H(+). Its function is as follows. Required for the formation of a threonylcarbamoyl group on adenosine at position 37 (t(6)A37) in tRNAs that read codons beginning with adenine. Is involved in the transfer of the threonylcarbamoyl moiety of threonylcarbamoyl-AMP (TC-AMP) to the N6 group of A37, together with TsaE and TsaB. TsaD likely plays a direct catalytic role in this reaction. This is tRNA N6-adenosine threonylcarbamoyltransferase from Chromohalobacter salexigens (strain ATCC BAA-138 / DSM 3043 / CIP 106854 / NCIMB 13768 / 1H11).